A 269-amino-acid chain; its full sequence is uncharacterized protein (269 aa).

The segment at M1–L21 is disordered.

This is an uncharacterized protein from Homo sapiens (Human).